Here is a 321-residue protein sequence, read N- to C-terminus: L-lactate dehydrogenase (321 aa).

NAD(+)-binding positions include Val-19, Asp-40, Lys-45, Tyr-71, and 85–86 (GA). Substrate contacts are provided by residues Gln-88, Arg-94, and 126–129 (NPVD). NAD(+) contacts are provided by residues 124–126 (ATN) and Ser-149. 154-157 (DTAR) provides a ligand contact to substrate. Beta-D-fructose 1,6-bisphosphate contacts are provided by Arg-159 and His-174. The active-site Proton acceptor is the His-181. Position 226 is a phosphotyrosine (Tyr-226). Thr-235 serves as a coordination point for substrate.

The protein belongs to the LDH/MDH superfamily. LDH family. In terms of assembly, homotetramer.

It is found in the cytoplasm. The catalysed reaction is (S)-lactate + NAD(+) = pyruvate + NADH + H(+). It participates in fermentation; pyruvate fermentation to lactate; (S)-lactate from pyruvate: step 1/1. With respect to regulation, allosterically activated by fructose 1,6-bisphosphate (FBP). Catalyzes the conversion of lactate to pyruvate. This chain is L-lactate dehydrogenase, found in Oceanobacillus iheyensis (strain DSM 14371 / CIP 107618 / JCM 11309 / KCTC 3954 / HTE831).